The primary structure comprises 145 residues: D-aminoacyl-tRNA deacylase (145 aa).

A Gly-cisPro motif, important for rejection of L-amino acids motif is present at residues 137 to 138 (GP).

Belongs to the DTD family. In terms of assembly, homodimer.

It localises to the cytoplasm. The enzyme catalyses glycyl-tRNA(Ala) + H2O = tRNA(Ala) + glycine + H(+). The catalysed reaction is a D-aminoacyl-tRNA + H2O = a tRNA + a D-alpha-amino acid + H(+). An aminoacyl-tRNA editing enzyme that deacylates mischarged D-aminoacyl-tRNAs. Also deacylates mischarged glycyl-tRNA(Ala), protecting cells against glycine mischarging by AlaRS. Acts via tRNA-based rather than protein-based catalysis; rejects L-amino acids rather than detecting D-amino acids in the active site. By recycling D-aminoacyl-tRNA to D-amino acids and free tRNA molecules, this enzyme counteracts the toxicity associated with the formation of D-aminoacyl-tRNA entities in vivo and helps enforce protein L-homochirality. This is D-aminoacyl-tRNA deacylase from Dichelobacter nodosus (strain VCS1703A).